We begin with the raw amino-acid sequence, 123 residues long: Cholecystokinin A (123 aa).

The N-terminal stretch at 1 to 20 is a signal peptide; sequence MYSGICICLLLAMLSASSKA. Residues 21 to 103 constitute a propeptide that is removed on maturation; it reads HQSEDAVVTE…FDQPHRINDR (83 aa). At Y105 the chain carries Sulfotyrosine. A Phenylalanine amide modification is found at F111. A propeptide spanning residues 115 to 123 is cleaved from the precursor; the sequence is SAEEYEYSS.

It belongs to the gastrin/cholecystokinin family. The precursor is cleaved by proteases to produce a number of active cholecystokinins. As to expression, brain, gastrointestinal tract and lung.

Its subcellular location is the secreted. The polypeptide is Cholecystokinin A (cck-a) (Xenopus laevis (African clawed frog)).